A 127-amino-acid polypeptide reads, in one-letter code: Dual endothelin-1/VEGF signal peptide receptor (127 aa).

The Extracellular segment spans residues 1–65 (MNALYVTTVP…EMKSRWNWGS (65 aa)). A helical membrane pass occupies residues 66 to 84 (ITCIICFTCVGSQLSMSSS). Residues 85–127 (KASNFSGPLQLYQRGIGHITNSYKRPQAPAWPCLSSGTMGRSH) are Cytoplasmic-facing.

In terms of tissue distribution, widely expressed with higher levels in kidney and aorta.

It is found in the cell membrane. Dual receptor for both endothelin-1 and the signal sequence of vascular endothelial growth factor A. Does not act as a receptor for angiotensin-2. Does not bind the VEGFA mature protein. May play a role in angiogenesis with a significant role in cardiovascular and neural development. This is Dual endothelin-1/VEGF signal peptide receptor from Mus musculus (Mouse).